Consider the following 349-residue polypeptide: Replication-associated protein (349 aa).

A CRESS-DNA virus Rep endonuclease domain is found at 9-118; sequence RLAARNIFLT…DGDYCESGQY (110 aa). The RCR-1 signature appears at 16–19; that stretch reads FLTY. A divalent metal cation-binding residues include E51, H59, and H61. Positions 59 to 61 match the RCR-2 motif; the sequence is HLH. Y105 functions as the For DNA cleavage activity in the catalytic mechanism. The RCR-3 signature appears at 105 to 108; that stretch reads YITK. D109 provides a ligand contact to a divalent metal cation. A binding to RBR1 region spans residues 141–151; the sequence is VEEALAIIRAG. The oligomerization stretch occupies residues 154-174; that stretch reads KTFIVSYHNVRANIERLFTKA. 220 to 227 contacts ATP; the sequence is GDSRTGKT.

The protein belongs to the geminiviridae Rep protein family. In terms of assembly, homooligomer. Interacts with the replication enhancer protein (REn). Interacts with host retinoblastoma-related protein 1 (RBR1), and may thereby induce the transcription of host replicative enzymes even if the cell is not dividing anymore. Interacts with host PCNA. Interacts with host SCE1 protein. The cofactor is Mg(2+). Mn(2+) serves as cofactor.

It is found in the host nucleus. Functionally, essential for the replication of viral ssDNA. The closed circular ssDNA genome is first converted to a superhelical dsDNA. Rep binds a specific region at the genome origin of replication. It introduces an endonucleolytic nick within the conserved sequence 5'-TAATATTAC-3' in the intergenic region of the genome present in all geminiviruses, thereby initiating the rolling circle replication (RCR). Following cleavage, binds covalently to the 5'-phosphate of DNA as a tyrosyl ester. The cleavage gives rise to a free 3'-OH that serves as a primer for the cellular DNA polymerase. The polymerase synthesizes the (+) strand DNA by rolling circle mechanism. After one round of replication, a Rep-catalyzed nucleotidyl transfer reaction releases a circular single-stranded virus genome, thereby terminating the replication. Displays origin-specific DNA cleavage, nucleotidyl transferase, ATPase and helicase activities. The protein is Replication-associated protein of Cabbage leaf curl virus (isolate Jamaica) (CaLCuV).